We begin with the raw amino-acid sequence, 270 residues long: Non-structural maintenance of chromosomes element 1 homolog (270 aa).

The RING-type; atypical zinc finger occupies 185–226 (CNVCHKIAIQCQLCENCGIPLHLQCAGIYFRGIANPLCPNCK). The tract at residues 236-270 (LSQVSSQGPSHSQAAPVRGRNQRSRNISTVARTSR) is disordered. Polar residues-rich tracts occupy residues 237-248 (SQVSSQGPSHSQ) and 259-270 (SRNISTVARTSR).

This sequence belongs to the NSE1 family. In terms of assembly, component of the SMC5-SMC6 complex.

The protein resides in the nucleus. The protein localises to the chromosome. It is found in the telomere. The catalysed reaction is S-ubiquitinyl-[E2 ubiquitin-conjugating enzyme]-L-cysteine + [acceptor protein]-L-lysine = [E2 ubiquitin-conjugating enzyme]-L-cysteine + N(6)-ubiquitinyl-[acceptor protein]-L-lysine.. Functionally, RING-type zinc finger-containing E3 ubiquitin ligase that assembles with melanoma antigen protein (MAGE) to catalyze the direct transfer of ubiquitin from E2 ubiquitin-conjugating enzyme to a specific substrate. Within MAGE-RING ubiquitin ligase complex, MAGE stimulates and specifies ubiquitin ligase activity likely through recruitment and/or stabilization of the E2 ubiquitin-conjugating enzyme at the E3:substrate complex. Involved in maintenance of genome integrity, DNA damage response and DNA repair. The sequence is that of Non-structural maintenance of chromosomes element 1 homolog (nsmce1) from Xenopus tropicalis (Western clawed frog).